We begin with the raw amino-acid sequence, 217 residues long: Peptidyl-tRNA hydrolase (217 aa).

A tRNA-binding site is contributed by tyrosine 14. The active-site Proton acceptor is the histidine 19. Residues tyrosine 64, asparagine 66, and asparagine 113 each coordinate tRNA. A disordered region spans residues 182–217; sequence MNRINAPPPKPKREQKRSSDAPDSSSDTNTSNASDG. Over residues 202–217 the composition is skewed to low complexity; that stretch reads APDSSSDTNTSNASDG.

It belongs to the PTH family. In terms of assembly, monomer.

The protein resides in the cytoplasm. It carries out the reaction an N-acyl-L-alpha-aminoacyl-tRNA + H2O = an N-acyl-L-amino acid + a tRNA + H(+). In terms of biological role, hydrolyzes ribosome-free peptidyl-tRNAs (with 1 or more amino acids incorporated), which drop off the ribosome during protein synthesis, or as a result of ribosome stalling. Its function is as follows. Catalyzes the release of premature peptidyl moieties from peptidyl-tRNA molecules trapped in stalled 50S ribosomal subunits, and thus maintains levels of free tRNAs and 50S ribosomes. This is Peptidyl-tRNA hydrolase from Roseiflexus sp. (strain RS-1).